A 122-amino-acid polypeptide reads, in one-letter code: Small ribosomal subunit protein uS13 (122 aa).

The disordered stretch occupies residues 95-122; sequence GLPVRGQRTHTNARTRKGKAKPIAGKKK.

This sequence belongs to the universal ribosomal protein uS13 family. As to quaternary structure, part of the 30S ribosomal subunit. Forms a loose heterodimer with protein S19. Forms two bridges to the 50S subunit in the 70S ribosome.

Its function is as follows. Located at the top of the head of the 30S subunit, it contacts several helices of the 16S rRNA. In the 70S ribosome it contacts the 23S rRNA (bridge B1a) and protein L5 of the 50S subunit (bridge B1b), connecting the 2 subunits; these bridges are implicated in subunit movement. Contacts the tRNAs in the A and P-sites. This is Small ribosomal subunit protein uS13 from Sphingopyxis alaskensis (strain DSM 13593 / LMG 18877 / RB2256) (Sphingomonas alaskensis).